We begin with the raw amino-acid sequence, 322 residues long: Tlg2p-like protein a (322 aa).

Topologically, residues 1–301 (MATRNRTLLF…QRHGGMVKCA (301 aa)) are cytoplasmic. Residues 116–146 (KEDQHNIESLTQEITFLLKKSEKQLQRLSAS) are a coiled coil. A t-SNARE coiled-coil homology domain is found at 226 to 288 (EEVSVEREKE…EDGLKQLQKA (63 aa)). Residues 302–322 (SVLVILCFIMLLLLILKEIFL) traverse the membrane as a helical; Anchor for type IV membrane protein segment.

Belongs to the syntaxin family. In terms of assembly, interacts with VTI12 and SYP61 to form a t-SNARE complex and with VPS45. Interacts with TNO1. Binds to YKT61 and YKT62. Core constituent of the SNARE complex required for membrane fusion at the trans-Golgi network. As to expression, mostly expressed in flowers, to a lower extent in leaves and roots, and, at low levels, in stems.

The protein resides in the golgi apparatus. It localises to the trans-Golgi network membrane. Its function is as follows. Contributes to the regulation of secretory and vacuolar transport pathways in the post-Golgi network, and to the maintenance of the Golgi apparatus and trans-Golgi network (TGN) morphologies. Together with VTI12, required for membrane fusion. Vesicle trafficking protein that functions in the secretory pathway and mediates liposome fusion; the fusion of phospholipid vesicles containing SYP41 and VTI12 is triggered by YKT61 and YKT62. Required for extracellular resistance responses to a fungal pathogen. Also involved in the protection of chloroplasts from salicylic acid-dependent biotic stress. This chain is Tlg2p-like protein a, found in Arabidopsis thaliana (Mouse-ear cress).